We begin with the raw amino-acid sequence, 486 residues long: MSEPKEPSPALACAAQDGSGLPEGWLQVQSMDLDAQGVARRADGKVVFIDGALPSEWVSASTYRKKNHWEQANLTAIHRESAQRVRPGCPHFGLHAGACGGCKMQHLHMGGQVAVKQRVLEDNLWHLGRVKPAMVLRPIEGPAWGYRYRARLSVRHVIKKGVVLVGFHERKSRYVADMAQCPVLPPHAAALLMPLRSLIAALDAHDSCPQIELACGDSVTALVLRHLQPLSVGDHARLRAFAAEHGVQWWLQPRGPDTVQPLDEGGEQLSYALPDFGITMPFKPTDFTQVNPHINRVLVARALRLLAVRPDERVIDWFCGLGNFTLPLATQARAVLGVEGNAALVARARANHGLNQALAQNHRVLAATDFVACNLFAMTPGMLLGHGAADKWLVDPPREGALALVKALADIEQSRRGAQGATALPAGAEDWVPPRRIVYVSCNPATLARDAALLVHLAGYQCAAAGMVNMFPHTAHVESIAVFERG.

The TRAM domain maps to 14-76 (AAQDGSGLPE…NHWEQANLTA (63 aa)). Positions 89, 99, 102, and 181 each coordinate [4Fe-4S] cluster. Residues Gln-289, Phe-318, Asn-323, Glu-339, Asn-374, and Asp-395 each coordinate S-adenosyl-L-methionine. Cys-442 serves as the catalytic Nucleophile.

It belongs to the class I-like SAM-binding methyltransferase superfamily. RNA M5U methyltransferase family. RlmD subfamily.

It carries out the reaction uridine(1939) in 23S rRNA + S-adenosyl-L-methionine = 5-methyluridine(1939) in 23S rRNA + S-adenosyl-L-homocysteine + H(+). In terms of biological role, catalyzes the formation of 5-methyl-uridine at position 1939 (m5U1939) in 23S rRNA. The sequence is that of 23S rRNA (uracil(1939)-C(5))-methyltransferase RlmD from Verminephrobacter eiseniae (strain EF01-2).